The sequence spans 72 residues: Translation initiation factor IF-1 (72 aa).

The S1-like domain maps to 2–72; it reads AKDDVIEVDG…TRGRITYRFK (71 aa).

Belongs to the IF-1 family. Component of the 30S ribosomal translation pre-initiation complex which assembles on the 30S ribosome in the order IF-2 and IF-3, IF-1 and N-formylmethionyl-tRNA(fMet); mRNA recruitment can occur at any time during PIC assembly.

The protein resides in the cytoplasm. Its function is as follows. One of the essential components for the initiation of protein synthesis. Stabilizes the binding of IF-2 and IF-3 on the 30S subunit to which N-formylmethionyl-tRNA(fMet) subsequently binds. Helps modulate mRNA selection, yielding the 30S pre-initiation complex (PIC). Upon addition of the 50S ribosomal subunit IF-1, IF-2 and IF-3 are released leaving the mature 70S translation initiation complex. This chain is Translation initiation factor IF-1, found in Lactococcus lactis subsp. lactis (strain IL1403) (Streptococcus lactis).